Reading from the N-terminus, the 341-residue chain is Uroporphyrinogen decarboxylase (341 aa).

Substrate contacts are provided by residues 23-27 (RQAGR), Asp73, Tyr148, Ser203, and His318.

It belongs to the uroporphyrinogen decarboxylase family. Homodimer.

The protein localises to the cytoplasm. The enzyme catalyses uroporphyrinogen III + 4 H(+) = coproporphyrinogen III + 4 CO2. The protein operates within porphyrin-containing compound metabolism; protoporphyrin-IX biosynthesis; coproporphyrinogen-III from 5-aminolevulinate: step 4/4. Functionally, catalyzes the decarboxylation of four acetate groups of uroporphyrinogen-III to yield coproporphyrinogen-III. The sequence is that of Uroporphyrinogen decarboxylase from Brucella suis (strain ATCC 23445 / NCTC 10510).